The chain runs to 788 residues: Pyridoxal-dependent decarboxylase domain-containing protein 1 (788 aa).

Over residues 28-40 the composition is skewed to basic and acidic residues; that stretch reads EDSQRRTEEENGK. The interval 28-51 is disordered; it reads EDSQRRTEEENGKKLISGDIPGPL. T414 carries the phosphothreonine modification. S652 is subject to Phosphoserine. The segment at 684–788 is disordered; that stretch reads AGVTLPPTPS…SQVEGPESLR (105 aa). Residues T687 and T691 each carry the phosphothreonine modification. Phosphoserine occurs at positions 710, 718, and 722. Basic and acidic residues predominate over residues 725–734; sequence HIEDLEKVER. Over residues 738–750 the composition is skewed to polar residues; the sequence is GPEQITLEASSTE. S748, S757, S779, and S786 each carry phosphoserine. Basic and acidic residues predominate over residues 772-788; that stretch reads PHPEDDHSQVEGPESLR.

This sequence belongs to the group II decarboxylase family. Pyridoxal 5'-phosphate serves as cofactor.

This Homo sapiens (Human) protein is Pyridoxal-dependent decarboxylase domain-containing protein 1 (PDXDC1).